The chain runs to 376 residues: Response regulator aspartate phosphatase H (376 aa).

6 TPR repeats span residues 99-132 (YYSL…LPFV), 139-172 (AEFH…YQNH), 180-213 (IQSL…AMDI), 220-253 (AISL…SREK), 259-292 (PKVL…ITAR), and 334-367 (EACA…QEDI).

This sequence belongs to the Rap family. As to quaternary structure, homodimer. Interacts with phosphorylated Spo0F. Each RapH protomer is bound to a monomer of Spo0F, forming a heterotetrameric complex. May also interact with non-phosphorylated Spo0F to inhibit the sporulation phosphorelay. Interacts with the C-terminal DNA-binding region of ComA. Does not interact with DegU.

The protein resides in the cytoplasm. Its activity is regulated as follows. Both activities are inhibited by RapH. Functionally, dual specificity regulatory protein that can control both sporulation and competence by acting on two distinct response regulators: Spo0F and ComA, respectively. Is involved in the temporal separation of competence and sporulation. Acts as a phosphatase that specifically dephosphorylates the sporulation initiation phosphotransferase Spo0F and inhibits its activity. RapH can also antagonize sporulation by sterically blocking phosphoryl transfer to and from Spo0F. In addition, inhibits the activity of ComA, a transcriptional factor that regulates the development of genetic competence. Acts by binding to ComA, leading to the inhibition of its DNA-binding activity. This is Response regulator aspartate phosphatase H (rapH) from Bacillus subtilis (strain 168).